The primary structure comprises 308 residues: 1,4-dihydroxy-2-naphthoate octaprenyltransferase (308 aa).

Transmembrane regions (helical) follow at residues 22–42 (TLPLALASIFTGSALGYWANP), 47–67 (GLVMVLCLLTTILLQVLSNFA), 101–121 (WGLILMVMASFLSGSFLIGIA), 129–149 (FAFAGLGILAIVAAITYTVGV), 153–173 (GYMGLGDISVLVFFGLLGVGG), 186–206 (IILPAIGSGLLASAVLNINNL), 235–255 (ILLSVAALCYLAFAVATAISW), 256–276 (TNYLFVLAMPLLAKHAIFVYC), and 286–306 (ILAQMSMISLLINILFSLGLL).

Belongs to the MenA family. Type 1 subfamily.

The protein resides in the cell inner membrane. The catalysed reaction is an all-trans-polyprenyl diphosphate + 1,4-dihydroxy-2-naphthoate + H(+) = a 2-demethylmenaquinol + CO2 + diphosphate. Its pathway is quinol/quinone metabolism; menaquinone biosynthesis; menaquinol from 1,4-dihydroxy-2-naphthoate: step 1/2. In terms of biological role, conversion of 1,4-dihydroxy-2-naphthoate (DHNA) to demethylmenaquinone (DMK). This Haemophilus influenzae (strain ATCC 51907 / DSM 11121 / KW20 / Rd) protein is 1,4-dihydroxy-2-naphthoate octaprenyltransferase.